The chain runs to 378 residues: 1-acyl-sn-glycerol-3-phosphate acyltransferase delta (378 aa).

Residues 11–31 traverse the membrane as a helical segment; that stretch reads FLCHLVFCYVFIASGLIVNAI. The HXXXXD motif signature appears at 96–101; it reads HKFEID. 3 helical membrane passes run 125–145, 311–331, and 338–358; these read ELAY…IFCT, WLFW…SMVS, and LASL…MIGV.

This sequence belongs to the 1-acyl-sn-glycerol-3-phosphate acyltransferase family.

It is found in the endoplasmic reticulum membrane. It catalyses the reaction a 1-acyl-sn-glycero-3-phosphate + an acyl-CoA = a 1,2-diacyl-sn-glycero-3-phosphate + CoA. The enzyme catalyses (4Z,7Z,10Z,13Z,16Z,19Z)-docosahexaenoyl-CoA + 1-hexadecanoyl-sn-glycero-3-phosphate = 1-hexadecanoyl-2-(4Z,7Z,10Z,13Z,16Z,19Z-docosahexaenoyl)-sn-glycero-3-phosphate + CoA. It carries out the reaction 1-octadecanoyl-sn-glycero-3-phosphate + (9Z,12Z)-octadecadienoyl-CoA = 1-octadecanoyl-2-(9Z,12Z-octadecadienoyl)-sn-glycero-3-phosphate + CoA. The catalysed reaction is 1-octadecanoyl-sn-glycero-3-phosphate + (4Z,7Z,10Z,13Z,16Z,19Z)-docosahexaenoyl-CoA = 1-octadecanoyl-2-(4Z,7Z,10Z,13Z,16Z,19Z-docosahexaenoyl)-sn-glycero-3-phosphate + CoA. It catalyses the reaction (4Z,7Z,10Z,13Z,16Z,19Z)-docosahexaenoyl-CoA + 1-(9Z-octadecenoyl)-sn-glycero-3-phosphate = 1-(9Z-octadecenoyl)-2-(4Z,7Z,10Z,13Z,16Z,19Z-docosahexaenoyl)-sn-glycero-3-phosphate + CoA. Its pathway is phospholipid metabolism; CDP-diacylglycerol biosynthesis; CDP-diacylglycerol from sn-glycerol 3-phosphate: step 2/3. Functionally, converts 1-acyl-sn-glycerol-3-phosphate (lysophosphatidic acid or LPA) into 1,2-diacyl-sn-glycerol-3-phosphate (phosphatidic acid or PA) by incorporating an acyl moiety at the sn-2 position of the glycerol backbone. Exhibits high acyl-CoA specificity for polyunsaturated fatty acyl-CoA, especially docosahexaenoyl-CoA (22:6-CoA, DHA-CoA). This is 1-acyl-sn-glycerol-3-phosphate acyltransferase delta (Agpat4) from Rattus norvegicus (Rat).